Reading from the N-terminus, the 463-residue chain is Tryptophan aminotransferase-related protein 4 (463 aa).

The chain crosses the membrane as a helical span at residues Leu-6–Ser-26. Pyridoxal 5'-phosphate-binding positions include Tyr-124, Thr-163–Thr-164, Asn-239, Asp-259–Tyr-262, Ser-282–Lys-285, and Arg-293. Lys-285 is modified (N6-(pyridoxal phosphate)lysine).

The protein belongs to the alliinase family. Pyridoxal 5'-phosphate serves as cofactor.

The protein localises to the membrane. Functionally, probable aminotransferase. The polypeptide is Tryptophan aminotransferase-related protein 4 (TAR4) (Arabidopsis thaliana (Mouse-ear cress)).